The sequence spans 129 residues: Glycine cleavage system H protein 2 (129 aa).

One can recognise a Lipoyl-binding domain in the interval 24-105 (SVTVGISDHA…PYVSWFFKLK (82 aa)). Residue Lys-65 is modified to N6-lipoyllysine.

The protein belongs to the GcvH family. The glycine cleavage system is composed of four proteins: P, T, L and H. (R)-lipoate is required as a cofactor.

The glycine cleavage system catalyzes the degradation of glycine. The H protein shuttles the methylamine group of glycine from the P protein to the T protein. The chain is Glycine cleavage system H protein 2 from Pseudomonas aeruginosa (strain ATCC 15692 / DSM 22644 / CIP 104116 / JCM 14847 / LMG 12228 / 1C / PRS 101 / PAO1).